The sequence spans 224 residues: Putative cobalt transport protein CbiM (224 aa).

A run of 6 helical transmembrane segments spans residues 8–28 (LPPLWCLIYYIICIPFIVYGI), 41–61 (AMPMLALSGAFMFILSSLKMP), 75–95 (FGAVFFGPAVVGVLSVIVLVF), 108–128 (LGANVLSMGIIGPLCGYAVWL), 138–158 (EIAMFFTAFVADLMTYVVTAI), and 169–189 (FFTALVTFLGIFAVTQIPLAI).

It belongs to the CbiM family. Forms an energy-coupling factor (ECF) transporter complex composed of an ATP-binding protein (A component, CbiO), a transmembrane protein (T component, CbiQ) and 2 possible substrate-capture proteins (S components, CbiM and CbiN) of unknown stoichimetry.

It is found in the cell membrane. It functions in the pathway cofactor biosynthesis; adenosylcobalamin biosynthesis. Functionally, part of the energy-coupling factor (ECF) transporter complex CbiMNOQ involved in cobalt import. The polypeptide is Putative cobalt transport protein CbiM (Methanosphaera stadtmanae (strain ATCC 43021 / DSM 3091 / JCM 11832 / MCB-3)).